The sequence spans 293 residues: Non-homologous end joining protein Ku (293 aa).

The Ku domain maps to 10–195 (ISFGLVHIPV…KLDKRELEMA (186 aa)). The segment at 216-229 (SDKIMKLVEEKAAK) is required for dimerization. The segment at 260–293 (RSRAGGGKDKGSEKAGADAKGRAKSGASRSRRKA) is disordered. The segment covering 265 to 280 (GGKDKGSEKAGADAKG) has biased composition (basic and acidic residues).

Belongs to the prokaryotic Ku family. As to quaternary structure, homodimer, may form higher-order multimers on DNA. Non-dimerized protein does not stimulate LigD ligase activity. Probably interacts with LigD.

In terms of biological role, with LigD forms a non-homologous end joining (NHEJ) DNA repair enzyme, which repairs dsDNA breaks with reduced fidelity. Stimulates rNTP addition to DSB and end joining (ligation) of linear DNA by LigD, on 3'-overhangs and probably also 5'-overhangs and blunt dsDNA breaks. Binds both ends of linear dsDNA protecting it from exonuclease activity. This chain is Non-homologous end joining protein Ku, found in Pseudomonas aeruginosa (strain ATCC 15692 / DSM 22644 / CIP 104116 / JCM 14847 / LMG 12228 / 1C / PRS 101 / PAO1).